A 381-amino-acid chain; its full sequence is Neuropeptide Y receptor type 2 (381 aa).

The tract at residues 1–37 (MGPIGTEADENQTVEEIKVEPYGPGHTTPRGELAPDP) is disordered. Over 1–52 (MGPIGTEADENQTVEEIKVEPYGPGHTTPRGELAPDPEPELIDSTKLTEVRV) the chain is Extracellular. N-linked (GlcNAc...) asparagine glycosylation occurs at N11. The helical transmembrane segment at 53–73 (VLILAYCSIILLGVVGNSLVI) threads the bilayer. Over 74–87 (HVVIKFKSMRTVTN) the chain is Cytoplasmic. A helical membrane pass occupies residues 88–108 (FFIANLAVADLLVNTLCLPFT). The Extracellular segment spans residues 109 to 125 (LTYTLMGEWKMGPVLCH). C124 and C204 are oxidised to a cystine. A helical transmembrane segment spans residues 126-146 (LVPYAQGLAVQVSTVTLTVIA). The Cytoplasmic portion of the chain corresponds to 147-166 (LDRHRCIVYHLDSKISKQNS). The chain crosses the membrane as a helical span at residues 167-187 (FLIIGLAWGISALLASPLAIF). Residues 188 to 217 (REYSLIEIIPDFEIVACTEKWPGEEKSIYG) are Extracellular-facing. A helical membrane pass occupies residues 218–238 (TVYSLSSLLILYVLPLGIISV). The Cytoplasmic portion of the chain corresponds to 239–269 (SYVRIWSKLKNHVSPGAANDHYHQRRQKTTK). A helical membrane pass occupies residues 270 to 290 (MLVFVVVVFAVSWLPLHAFQL). Residues 291-305 (AVDIDSQVLDLKEYK) are Extracellular-facing. A helical membrane pass occupies residues 306-326 (LIFTVFHIIAMCSTFANPLLY). The Cytoplasmic segment spans residues 327–381 (GWMNSNYRKAFLSAFRCQQRLDAIQSEVCVTGKAKTNVEVEKNHGAADSAEATNV). The S-palmitoyl cysteine moiety is linked to residue C343.

This sequence belongs to the G-protein coupled receptor 1 family.

It is found in the cell membrane. Its function is as follows. Receptor for neuropeptide Y and peptide YY. The polypeptide is Neuropeptide Y receptor type 2 (NPY2R) (Cavia porcellus (Guinea pig)).